Consider the following 425-residue polypeptide: Protein PTI1 (425 aa).

Phosphoserine is present on Ser-272.

In terms of assembly, component of the cleavage and polyadenylation factor (CPF) complex, which is composed of PTI1, SYC1, SSU72, GLC7, MPE1, REF2, PFS2, PTA1, YSH1/BRR5, SWD2, CFT2/YDH1, YTH1, CFT1/YHH1, FIP1 and PAP1. Component of the APT complex, which is a subcomplex of CPF, and is composed of PTI1, SYC1, SSU72, GLC7, REF2, PTA1 and SWD2.

It localises to the nucleus. Component of the cleavage and polyadenylation factor (CPF) complex, which plays a key role in polyadenylation-dependent pre-mRNA 3'-end formation and cooperates with cleavage factors including the CFIA complex and NAB4/CFIB. Component of the APT complex, which may be involved in polyadenylation-independent transcript 3'-end formation. PTI1 is required for 3'-end formation of snoRNAs. In Saccharomyces cerevisiae (strain ATCC 204508 / S288c) (Baker's yeast), this protein is Protein PTI1 (PTI1).